The following is a 358-amino-acid chain: D-alanine--D-alanine ligase (358 aa).

The ATP-grasp domain maps to 136–341 (KYILQAAGVP…YGDLIEELIQ (206 aa)). 169–224 (EGSLLYPMFVKPANMGSSVGISKAENREELQNALALAYQYDSRAIVEQGIEAREIE) contacts ATP. 3 residues coordinate Mg(2+): aspartate 295, glutamate 308, and asparagine 310.

It belongs to the D-alanine--D-alanine ligase family. Mg(2+) is required as a cofactor. It depends on Mn(2+) as a cofactor.

The protein localises to the cytoplasm. It catalyses the reaction 2 D-alanine + ATP = D-alanyl-D-alanine + ADP + phosphate + H(+). The protein operates within cell wall biogenesis; peptidoglycan biosynthesis. Functionally, cell wall formation. This Enterococcus hirae (strain ATCC 9790 / DSM 20160 / JCM 8729 / LMG 6399 / NBRC 3181 / NCIMB 6459 / NCDO 1258 / NCTC 12367 / WDCM 00089 / R) protein is D-alanine--D-alanine ligase.